The sequence spans 196 residues: MANNMSSRQACHAARYVVARVLRGLFWCLKYTVILPLATMALMALFVLWKDNTTPGKLLVKEINFVRQTAPAGQFPVSECWFSSSDSSGRSEIQGICHYRAADAADYVRETDRSLMQLVTALWATLALMYVSLAAITGKYPVRPGKMKCIRVVTADEHLKEVYTEDASLPGKIRKCPVYLPDDRTNRNNGDKNEHA.

This Escherichia coli (strain K12) protein is Protein TraP (traP).